The chain runs to 188 residues: UPF0301 protein Cag_1601 (188 aa).

It belongs to the UPF0301 (AlgH) family.

The chain is UPF0301 protein Cag_1601 from Chlorobium chlorochromatii (strain CaD3).